A 160-amino-acid chain; its full sequence is Protransforming growth factor alpha (160 aa).

Positions methionine 1 to leucine 23 are cleaved as a signal peptide. Residues glutamate 24–alanine 39 constitute a propeptide, removed in mature form. The Extracellular portion of the chain corresponds to glutamate 24–glutamine 98. Asparagine 25 carries an N-linked (GlcNAc...) asparagine glycan. In terms of domain architecture, EGF-like spans histidine 43–glutamate 83. 3 disulfides stabilise this stretch: cysteine 47-cysteine 60, cysteine 55-cysteine 71, and cysteine 73-cysteine 82. Positions valine 90–valine 160 are cleaved as a propeptide — removed in mature form. Residues alanine 99–cysteine 124 traverse the membrane as a helical segment. The Cytoplasmic segment spans residues glutamine 125–valine 160. 2 S-palmitoyl cysteine lipidation sites follow: cysteine 153 and cysteine 154.

Interacts with the PDZ domains of MAGI3, SDCBP and SNTA1. The interaction with SDCBP, is required for the targeting to the cell surface. In the endoplasmic reticulum, in its immature form (i.e. with a prosegment and lacking full N-glycosylation), interacts with CNIH. In the Golgi apparatus, may form a complex with CNIH and GORASP2. Interacts (via cytoplasmic C-terminal domain) with NKD2.

It is found in the secreted. The protein resides in the extracellular space. Its subcellular location is the cell membrane. Functionally, TGF alpha is a mitogenic polypeptide that is able to bind to the EGF receptor/EGFR and to act synergistically with TGF beta to promote anchorage-independent cell proliferation in soft agar. The chain is Protransforming growth factor alpha (TGFA) from Sus scrofa (Pig).